The chain runs to 61 residues: Large ribosomal subunit protein bL32 (61 aa).

The disordered stretch occupies residues 1–22 (MAVPKQKSSKSRGRKRRTHQKV). Over residues 7–20 (KSSKSRGRKRRTHQ) the composition is skewed to basic residues.

The protein belongs to the bacterial ribosomal protein bL32 family.

In Desulforapulum autotrophicum (strain ATCC 43914 / DSM 3382 / VKM B-1955 / HRM2) (Desulfobacterium autotrophicum), this protein is Large ribosomal subunit protein bL32.